Reading from the N-terminus, the 150-residue chain is Transcription antitermination protein NusB (150 aa).

The protein belongs to the NusB family.

In terms of biological role, involved in transcription antitermination. Required for transcription of ribosomal RNA (rRNA) genes. Binds specifically to the boxA antiterminator sequence of the ribosomal RNA (rrn) operons. The chain is Transcription antitermination protein NusB from Alcanivorax borkumensis (strain ATCC 700651 / DSM 11573 / NCIMB 13689 / SK2).